The following is a 456-amino-acid chain: Tyrosine phenol-lyase (456 aa).

Lys-257 is modified (N6-(pyridoxal phosphate)lysine).

The protein belongs to the beta-eliminating lyase family. Homotetramer. Pyridoxal 5'-phosphate is required as a cofactor. Post-translationally, contains L-DOPA (3',4'-dihydroxyphenylalanine).

The protein localises to the cytoplasm. The catalysed reaction is L-tyrosine + H2O = phenol + pyruvate + NH4(+). The chain is Tyrosine phenol-lyase (tpl) from Enterobacter agglomerans (Erwinia herbicola).